The sequence spans 156 residues: Small ribosomal subunit protein uS7 (156 aa).

The protein belongs to the universal ribosomal protein uS7 family. Part of the 30S ribosomal subunit. Contacts proteins S9 and S11.

One of the primary rRNA binding proteins, it binds directly to 16S rRNA where it nucleates assembly of the head domain of the 30S subunit. Is located at the subunit interface close to the decoding center, probably blocks exit of the E-site tRNA. The protein is Small ribosomal subunit protein uS7 of Salmonella choleraesuis (strain SC-B67).